We begin with the raw amino-acid sequence, 423 residues long: Elongation factor 1-alpha (423 aa).

Positions 5–221 (KEHINVAFIG…DLLKPPEKLV (217 aa)) constitute a tr-type G domain. Positions 14–21 (GHVDHGKS) are G1. 14-21 (GHVDHGKS) is a GTP binding site. Ser21 provides a ligand contact to Mg(2+). The segment at 70-74 (GVTID) is G2. The interval 91-94 (DCPG) is G3. Residues 91–95 (DCPGH) and 146–149 (NKMD) each bind GTP. A G4 region spans residues 146-149 (NKMD). The segment at 185–187 (SAY) is G5.

Belongs to the TRAFAC class translation factor GTPase superfamily. Classic translation factor GTPase family. EF-Tu/EF-1A subfamily.

It localises to the cytoplasm. The enzyme catalyses GTP + H2O = GDP + phosphate + H(+). GTP hydrolase that promotes the GTP-dependent binding of aminoacyl-tRNA to the A-site of ribosomes during protein biosynthesis. The polypeptide is Elongation factor 1-alpha (Archaeoglobus fulgidus (strain ATCC 49558 / DSM 4304 / JCM 9628 / NBRC 100126 / VC-16)).